The sequence spans 88 residues: Augerpeptide Hhe9a (88 aa).

The signal sequence occupies residues 1-21; that stretch reads MMTKTGLVLLFAFLLVFPVSS. Positions 22-49 are excised as a propeptide; that stretch reads LPMDAEAGHARLEMDKRDAGNEAWTRLL. Disulfide bonds link cysteine 56–cysteine 71, cysteine 61–cysteine 73, and cysteine 67–cysteine 86.

In terms of tissue distribution, expressed by the venom duct.

The protein localises to the secreted. This is Augerpeptide Hhe9a from Hastula hectica (Sea snail).